A 402-amino-acid polypeptide reads, in one-letter code: UDP-glucose 6-dehydrogenase (402 aa).

NAD(+) is bound by residues 2-19 (KIAV…GVLL), Val-11, Asp-29, Lys-34, Thr-83, Thr-118, and Glu-145. Substrate is bound by residues 141–145 (EFLRE), Lys-204, Asn-208, 249–253 (YNNPS), and Gly-257. Tyr-259 is an NAD(+) binding site. The active-site Nucleophile is Cys-260. Lys-263 serves as a coordination point for NAD(+). Substrate is bound at residue Lys-320. Position 327 (Arg-327) interacts with NAD(+).

This sequence belongs to the UDP-glucose/GDP-mannose dehydrogenase family.

It catalyses the reaction UDP-alpha-D-glucose + 2 NAD(+) + H2O = UDP-alpha-D-glucuronate + 2 NADH + 3 H(+). It functions in the pathway nucleotide-sugar biosynthesis; UDP-alpha-D-glucuronate biosynthesis; UDP-alpha-D-glucuronate from UDP-alpha-D-glucose: step 1/1. Functionally, catalyzes the formation of UDP-glucuronic acid which is required for capsular hyaluronic acid synthesis. This is UDP-glucose 6-dehydrogenase (hasB) from Streptococcus pyogenes serotype M1.